The sequence spans 116 residues: MNAVNEMAVPFVFTDNAAGKVKELIEEEGNPGLKLRVFVTGGGCSGFQYGFTFDEEVNEDDTTMEKNGVTLLIDPMSYQYLVGAEIDYTEGLEGSQFVIRNPNATSTCGCGSSFSA.

Iron-sulfur cluster contacts are provided by Cys44, Cys108, and Cys110.

It belongs to the HesB/IscA family. As to quaternary structure, homodimer. Iron-sulfur cluster serves as cofactor.

Required for insertion of 4Fe-4S clusters. This is Putative iron-sulfur cluster insertion protein ErpA from Dechloromonas aromatica (strain RCB).